Here is a 177-residue protein sequence, read N- to C-terminus: UPF0251 protein Cag_0886 (177 aa).

The segment at 147–177 (GGCLSDEESDEQENEQRTVGYPESEEELEIE) is disordered.

The protein belongs to the UPF0251 family.

The protein is UPF0251 protein Cag_0886 of Chlorobium chlorochromatii (strain CaD3).